A 206-amino-acid polypeptide reads, in one-letter code: Glycerol-3-phosphate acyltransferase (206 aa).

Transmembrane regions (helical) follow at residues 14–34 (IALA…GLIL), 67–87 (ATLL…GYFL), 91–111 (AAII…WIGF), 124–144 (LLGV…AVAF), and 148–168 (YSSL…LILG).

It belongs to the PlsY family. As to quaternary structure, probably interacts with PlsX.

The protein localises to the cell inner membrane. It carries out the reaction an acyl phosphate + sn-glycerol 3-phosphate = a 1-acyl-sn-glycero-3-phosphate + phosphate. The protein operates within lipid metabolism; phospholipid metabolism. Functionally, catalyzes the transfer of an acyl group from acyl-phosphate (acyl-PO(4)) to glycerol-3-phosphate (G3P) to form lysophosphatidic acid (LPA). This enzyme utilizes acyl-phosphate as fatty acyl donor, but not acyl-CoA or acyl-ACP. The polypeptide is Glycerol-3-phosphate acyltransferase (Rhizobium etli (strain CIAT 652)).